Consider the following 265-residue polypeptide: Eukaryotic translation initiation factor 3 subunit J (265 aa).

The segment at methionine 1–leucine 71 is disordered. Over residues tryptophan 23–proline 32 the composition is skewed to acidic residues. The span at glutamate 42–leucine 71 shows a compositional bias: basic and acidic residues. At serine 65 the chain carries Phosphoserine. A Phosphothreonine modification is found at threonine 75. A Phosphoserine modification is found at serine 92. The tract at residues valine 219–methionine 265 is disordered. Residue arginine 220 is modified to Omega-N-methylarginine. Positions phenylalanine 249–methionine 265 are enriched in acidic residues.

This sequence belongs to the eIF-3 subunit J family. As to quaternary structure, probable component of the eukaryotic translation initiation factor 3 (eIF-3) complex. Is not part of the eIF-3 core complex, with which it is associated in substochiometric amounts.

The protein resides in the cytoplasm. Its function is as follows. Component of the eukaryotic translation initiation factor 3 (eIF-3) complex, which is involved in protein synthesis of a specialized repertoire of mRNAs and, together with other initiation factors, stimulates binding of mRNA and methionyl-tRNAi to the 40S ribosome. The eIF-3 complex specifically targets and initiates translation of a subset of mRNAs involved in cell proliferation. The protein is Eukaryotic translation initiation factor 3 subunit J of Saccharomyces cerevisiae (strain ATCC 204508 / S288c) (Baker's yeast).